The following is a 399-amino-acid chain: Integral membrane protein GPR137B (399 aa).

The segment at 1 to 22 (MRPERPRPRGSAPGPMETPPWD) is disordered. Residues 1–46 (MRPERPRPRGSAPGPMETPPWDPARNDSLPPTLTPAVPPYVKLGLT) lie on the Lumenal side of the membrane. Residue asparagine 26 is glycosylated (N-linked (GlcNAc...) asparagine). The chain crosses the membrane as a helical span at residues 47–67 (VVYTVFYALLFVFIYVQLWLV). Residues 68–79 (LRYRHKRLSYQS) are Cytoplasmic-facing. The helical transmembrane segment at 80 to 100 (VFLFLCLFWASLRTVLFSFYF) threads the bilayer. The Lumenal portion of the chain corresponds to 101-111 (KDFVAANSLSP). A helical membrane pass occupies residues 112–132 (FVFWLLYCFPVCLQFFTLTLM). At 133-159 (NLYFTQVIFKAKSKYSPELLKYRLPLY) the chain is on the cytoplasmic side. The chain crosses the membrane as a helical span at residues 160–180 (LASLFISLVFLLVNLTCAVLV). The Lumenal segment spans residues 181–188 (KTGNWERK). The chain crosses the membrane as a helical span at residues 189–209 (VIVSVRVAINDTLFVLCAVSL). The Cytoplasmic portion of the chain corresponds to 210–237 (SICLYKISKMSLANIYLESKGSSVCQVT). The helical transmembrane segment at 238-258 (AIGVTVILLYTSRACYNLFIL) threads the bilayer. Topologically, residues 259–292 (SFSQNKSVHSFDYDWYNVSDQADLKNQLGDAGYV) are lumenal. Asparagine 263 and asparagine 275 each carry an N-linked (GlcNAc...) asparagine glycan. Residues 293 to 313 (LFGVVLFVWELLPTTLVVYFF) form a helical membrane-spanning segment. Over 314-399 (RVRNPTKDLT…TLDPDKPSLG (86 aa)) the chain is Cytoplasmic.

The protein belongs to the GPR137 family. As to quaternary structure, interaction with RRAGA; increases RRAGA recruitment to lysosomes. Interacts with MTOR; this interaction is amino acid sensitive. As to expression, expressed in kidney, heart, brain and placenta.

Its subcellular location is the lysosome membrane. Lysosomal integral membrane protein that regulates the localization and activity of mTORC1, a signaling complex promoting cell growth in response to growth factors, energy levels, and amino acids. Interacts with Rag GTPases and increases the lysosomial localization and activity of Rag GTPases and thereby regulates mTORC1 translocation and activity in lysosome. Involved in the regulation of lysosomal morphology and autophagy. Functionally, also acts as a negative regulator of osteoclast activity. Involved in interleukin-4-induced M2 macrophage polarization. The chain is Integral membrane protein GPR137B (GPR137B) from Homo sapiens (Human).